A 179-amino-acid chain; its full sequence is Crossover junction endodeoxyribonuclease RuvC (179 aa).

Active-site residues include Asp-7, Glu-67, and Asp-140. Mg(2+)-binding residues include Asp-7, Glu-67, and Asp-140.

The protein belongs to the RuvC family. As to quaternary structure, homodimer which binds Holliday junction (HJ) DNA. The HJ becomes 2-fold symmetrical on binding to RuvC with unstacked arms; it has a different conformation from HJ DNA in complex with RuvA. In the full resolvosome a probable DNA-RuvA(4)-RuvB(12)-RuvC(2) complex forms which resolves the HJ. Mg(2+) serves as cofactor.

The protein resides in the cytoplasm. It carries out the reaction Endonucleolytic cleavage at a junction such as a reciprocal single-stranded crossover between two homologous DNA duplexes (Holliday junction).. Functionally, the RuvA-RuvB-RuvC complex processes Holliday junction (HJ) DNA during genetic recombination and DNA repair. Endonuclease that resolves HJ intermediates. Cleaves cruciform DNA by making single-stranded nicks across the HJ at symmetrical positions within the homologous arms, yielding a 5'-phosphate and a 3'-hydroxyl group; requires a central core of homology in the junction. The consensus cleavage sequence is 5'-(A/T)TT(C/G)-3'. Cleavage occurs on the 3'-side of the TT dinucleotide at the point of strand exchange. HJ branch migration catalyzed by RuvA-RuvB allows RuvC to scan DNA until it finds its consensus sequence, where it cleaves and resolves the cruciform DNA. The polypeptide is Crossover junction endodeoxyribonuclease RuvC (Salinibacter ruber (strain DSM 13855 / M31)).